The following is a 422-amino-acid chain: Dihydrofolate synthase/folylpolyglutamate synthase (422 aa).

Asp29–Gly31 serves as a coordination point for 7,8-dihydropteroate. Gly59–Thr62 lines the ATP pocket. Mg(2+) is bound at residue Ser83. Residue Thr122–Glu125 participates in 7,8-dihydropteroate binding. Mg(2+) is bound at residue Glu146. Leu153–Ala155 provides a ligand contact to 7,8-dihydropteroate. Residue His173 participates in Mg(2+) binding. The residue at position 188 (Lys188) is an N6-carboxylysine. ATP contacts are provided by Asn257, Arg289, and Asp302.

The protein belongs to the folylpolyglutamate synthase family. In terms of assembly, monomer. Mg(2+) serves as cofactor.

It catalyses the reaction 7,8-dihydropteroate + L-glutamate + ATP = 7,8-dihydrofolate + ADP + phosphate + H(+). The enzyme catalyses (6S)-5,6,7,8-tetrahydrofolyl-(gamma-L-Glu)(n) + L-glutamate + ATP = (6S)-5,6,7,8-tetrahydrofolyl-(gamma-L-Glu)(n+1) + ADP + phosphate + H(+). The catalysed reaction is 10-formyltetrahydrofolyl-(gamma-L-Glu)(n) + L-glutamate + ATP = 10-formyltetrahydrofolyl-(gamma-L-Glu)(n+1) + ADP + phosphate + H(+). It carries out the reaction (6R)-5,10-methylenetetrahydrofolyl-(gamma-L-Glu)(n) + L-glutamate + ATP = (6R)-5,10-methylenetetrahydrofolyl-(gamma-L-Glu)(n+1) + ADP + phosphate + H(+). The protein operates within cofactor biosynthesis; tetrahydrofolate biosynthesis; 7,8-dihydrofolate from 2-amino-4-hydroxy-6-hydroxymethyl-7,8-dihydropteridine diphosphate and 4-aminobenzoate: step 2/2. Its pathway is cofactor biosynthesis; tetrahydrofolylpolyglutamate biosynthesis. Its function is as follows. Functions in two distinct reactions of the de novo folate biosynthetic pathway. Catalyzes the addition of a glutamate residue to dihydropteroate (7,8-dihydropteroate or H2Pte) to form dihydrofolate (7,8-dihydrofolate monoglutamate or H2Pte-Glu). Also catalyzes successive additions of L-glutamate to tetrahydrofolate or 10-formyltetrahydrofolate or 5,10-methylenetetrahydrofolate, leading to folylpolyglutamate derivatives. The polypeptide is Dihydrofolate synthase/folylpolyglutamate synthase (Escherichia coli (strain K12)).